The chain runs to 757 residues: LPS-assembly protein LptD (757 aa).

The N-terminal stretch at 1–21 (MRRLIPIAITGSLLWGAAVQA) is a signal peptide.

This sequence belongs to the LptD family. Component of the lipopolysaccharide transport and assembly complex. Interacts with LptE and LptA.

It localises to the cell outer membrane. Its function is as follows. Together with LptE, is involved in the assembly of lipopolysaccharide (LPS) at the surface of the outer membrane. The polypeptide is LPS-assembly protein LptD (Alkalilimnicola ehrlichii (strain ATCC BAA-1101 / DSM 17681 / MLHE-1)).